The following is a 130-amino-acid chain: Putative F-box protein At1g77880 (130 aa).

The 47-residue stretch at 18 to 64 (KVSIPYLPDDLLLNCLARISRLYYPTLSLVSKRFRSLLASTELYETR) folds into the F-box domain.

The sequence is that of Putative F-box protein At1g77880 from Arabidopsis thaliana (Mouse-ear cress).